Consider the following 331-residue polypeptide: Glucokinase (331 aa).

Residue 13–18 coordinates ATP; it reads GDIGGT.

This sequence belongs to the bacterial glucokinase family.

The protein resides in the cytoplasm. The catalysed reaction is D-glucose + ATP = D-glucose 6-phosphate + ADP + H(+). This Caulobacter vibrioides (strain ATCC 19089 / CIP 103742 / CB 15) (Caulobacter crescentus) protein is Glucokinase.